The sequence spans 162 residues: Nitric oxide synthase, inducible (162 aa).

A compositionally biased stretch (polar residues) spans 24 to 37; it reads LQYHSLSKQQNESP. Residues 24–65 are disordered; it reads LQYHSLSKQQNESPQPLVGTGKKSPESLVKPDATPLSSPRHV. Zn(2+)-binding residues include C90 and C95. S98 contacts (6R)-L-erythro-5,6,7,8-tetrahydrobiopterin. E132 contributes to the L-arginine binding site. Position 160 (H160) interacts with FAD.

The protein belongs to the NOS family. As to quaternary structure, homodimer. Interacts with NHERF1. Interacts with GAPDH; induced by oxidatively-modified low-densitity lipoprotein (LDL(ox)). Interacts with S100A8 and S100A9 to form the iNOS-S100A8/9 transnitrosylase complex. Interacts with SPSB1, SPSB2 and SPSB4. Interacts with ELOC and CUL5 in the presence of SPSB1 or SPSB2 or SPSB4. Forms a complex with ASL, ASS1 and HSP90AA1; the complex regulates cell-autonomous L-arginine synthesis and citrulline recycling while channeling extracellular L-arginine to nitric oxide synthesis pathway. It depends on heme b as a cofactor. The cofactor is FAD. Requires FMN as cofactor. (6R)-L-erythro-5,6,7,8-tetrahydrobiopterin is required as a cofactor. Post-translationally, polyubiquitinated; mediated by SPSB1, SPSB2 and SPSB4, leading to proteasomal degradation.

It is found in the cytoplasm. It localises to the cytosol. It catalyses the reaction 2 L-arginine + 3 NADPH + 4 O2 + H(+) = 2 L-citrulline + 2 nitric oxide + 3 NADP(+) + 4 H2O. Its activity is regulated as follows. Regulated by calcium/calmodulin. Produces nitric oxide (NO) which is a messenger molecule with diverse functions throughout the body. In macrophages, NO mediates tumoricidal and bactericidal actions. Also has nitrosylase activity and mediates cysteine S-nitrosylation of cytoplasmic target proteins such PTGS2/COX2. As component of the iNOS-S100A8/9 transnitrosylase complex involved in the selective inflammatory stimulus-dependent S-nitrosylation of GAPDH implicated in regulation of the GAIT complex activity and probably multiple targets including ANXA5, EZR, MSN and VIM. Involved in inflammation, enhances the synthesis of pro-inflammatory mediators such as IL6 and IL8. This Macaca mulatta (Rhesus macaque) protein is Nitric oxide synthase, inducible (NOS2).